Reading from the N-terminus, the 732-residue chain is Polyribonucleotide nucleotidyltransferase (732 aa).

Mg(2+) contacts are provided by aspartate 483 and aspartate 489. The KH domain occupies proline 550–valine 609. The region spanning glycine 619–lysine 687 is the S1 motif domain. The disordered stretch occupies residues leucine 684–arginine 732. Over residues glutamine 702–glycine 720 the composition is skewed to basic and acidic residues.

This sequence belongs to the polyribonucleotide nucleotidyltransferase family. It depends on Mg(2+) as a cofactor.

The protein resides in the cytoplasm. The catalysed reaction is RNA(n+1) + phosphate = RNA(n) + a ribonucleoside 5'-diphosphate. Involved in mRNA degradation. Catalyzes the phosphorolysis of single-stranded polyribonucleotides processively in the 3'- to 5'-direction. In Gemmatimonas aurantiaca (strain DSM 14586 / JCM 11422 / NBRC 100505 / T-27), this protein is Polyribonucleotide nucleotidyltransferase.